Here is a 400-residue protein sequence, read N- to C-terminus: LIM/homeobox protein Lhx3 (400 aa).

LIM zinc-binding domains are found at residues 34–84 (CAGC…CKDD) and 93–147 (CAAC…CKAD). A Phosphoserine modification is found at Ser-74. Positions 160 to 219 (AKRPRTTITAKQLETLKSAYNTSPKPARHVREQLSSETGLDMRVVQVWFQNRRAKEKRLK) form a DNA-binding region, homeobox. Disordered stretches follow at residues 215-280 (EKRL…SSLG) and 297-400 (TLDH…HAQF). A Phosphotyrosine modification is found at Tyr-230. Phosphoserine occurs at positions 237 and 241. 2 stretches are compositionally biased toward pro residues: residues 319 to 334 (GIPP…PGPQ) and 352 to 361 (SGPPGGPPPM). Over residues 368-380 (GPSSDLSTESSSG) the composition is skewed to polar residues.

In terms of assembly, interacts with POU1F1. At neuronal promoters, interacts with LDB1, in motor neurons LDB1 is displaced by ISL1 and a ternary complex is formed in which ISL1 contacts both LHX3 and LDB1; allosteric structural changes in the DNA binding domain of LHX3, induced by the ISL1-LHX3 interaction, may explain differences in sequence specificity of the different complexes. Interacts with LDB2. May interact with CITED2/MRG1. In terms of tissue distribution, mostly expressed in the pituitary anterior and intermediate lobes. It is also expressed in the pineal gland and transiently in the primordia of motor neurons including the spinal cord, pons and medulla oblongata.

It is found in the nucleus. Transcription factor. Recognizes and binds to the consensus sequence motif 5'-AATTAATTA-3' in the regulatory elements of target genes, such as glycoprotein hormones alpha chain CGA and visual system homeobox CHX10, positively modulating transcription; transcription can be co-activated by LDB2. Synergistically enhances transcription from the prolactin promoter in cooperation with POU1F1/Pit-1. Required for the establishment of the specialized cells of the pituitary gland and the nervous system. Involved in the development of interneurons and motor neurons in cooperation with LDB1 and ISL1. The protein is LIM/homeobox protein Lhx3 (Lhx3) of Mus musculus (Mouse).